A 476-amino-acid chain; its full sequence is Sulfate adenylyltransferase subunit 1 (476 aa).

The tr-type G domain maps to 24–238 (KSLLRFLTCG…ELLEYVDIDR (215 aa)). A G1 region spans residues 33–40 (GSVDDGKS). 33-40 (GSVDDGKS) is a binding site for GTP. The tract at residues 91 to 95 (GITID) is G2. A G3 region spans residues 112 to 115 (DTPG). GTP contacts are provided by residues 112–116 (DTPGH) and 167–170 (NKMD). The segment at 167-170 (NKMD) is G4. The interval 205–207 (SAL) is G5.

The protein belongs to the TRAFAC class translation factor GTPase superfamily. Classic translation factor GTPase family. CysN/NodQ subfamily. Heterodimer composed of CysD, the smaller subunit, and CysN.

It carries out the reaction sulfate + ATP + H(+) = adenosine 5'-phosphosulfate + diphosphate. It participates in sulfur metabolism; hydrogen sulfide biosynthesis; sulfite from sulfate: step 1/3. In terms of biological role, with CysD forms the ATP sulfurylase (ATPS) that catalyzes the adenylation of sulfate producing adenosine 5'-phosphosulfate (APS) and diphosphate, the first enzymatic step in sulfur assimilation pathway. APS synthesis involves the formation of a high-energy phosphoric-sulfuric acid anhydride bond driven by GTP hydrolysis by CysN coupled to ATP hydrolysis by CysD. This Vibrio cholerae serotype O1 (strain M66-2) protein is Sulfate adenylyltransferase subunit 1.